We begin with the raw amino-acid sequence, 291 residues long: ATP synthase gamma chain (291 aa).

The protein belongs to the ATPase gamma chain family. F-type ATPases have 2 components, CF(1) - the catalytic core - and CF(0) - the membrane proton channel. CF(1) has five subunits: alpha(3), beta(3), gamma(1), delta(1), epsilon(1). CF(0) has three main subunits: a, b and c.

Its subcellular location is the cell membrane. Produces ATP from ADP in the presence of a proton gradient across the membrane. The gamma chain is believed to be important in regulating ATPase activity and the flow of protons through the CF(0) complex. The chain is ATP synthase gamma chain from Streptococcus equinus (Streptococcus bovis).